The primary structure comprises 215 residues: NADH-quinone oxidoreductase subunit C (215 aa).

Belongs to the complex I 30 kDa subunit family. As to quaternary structure, NDH-1 is composed of 14 different subunits. Subunits NuoB, C, D, E, F, and G constitute the peripheral sector of the complex.

The protein resides in the cell inner membrane. It carries out the reaction a quinone + NADH + 5 H(+)(in) = a quinol + NAD(+) + 4 H(+)(out). Functionally, NDH-1 shuttles electrons from NADH, via FMN and iron-sulfur (Fe-S) centers, to quinones in the respiratory chain. The immediate electron acceptor for the enzyme in this species is believed to be ubiquinone. Couples the redox reaction to proton translocation (for every two electrons transferred, four hydrogen ions are translocated across the cytoplasmic membrane), and thus conserves the redox energy in a proton gradient. This chain is NADH-quinone oxidoreductase subunit C, found in Methylobacterium sp. (strain 4-46).